The primary structure comprises 346 residues: Probable choline kinase 3 (346 aa).

Residues Arg-71, Gln-207, and Asp-224 each contribute to the ATP site.

This sequence belongs to the choline/ethanolamine kinase family.

The catalysed reaction is choline + ATP = phosphocholine + ADP + H(+). It participates in phospholipid metabolism; phosphatidylcholine biosynthesis; phosphocholine from choline: step 1/1. Functionally, involved in phospholipid biosynthesis. Catalyzes the first step in phosphatidylcholine biosynthesis. This chain is Probable choline kinase 3, found in Arabidopsis thaliana (Mouse-ear cress).